We begin with the raw amino-acid sequence, 669 residues long: UvrABC system protein C (669 aa).

The GIY-YIG domain maps to 14 to 91 (DSPGCYLHKD…IQRYKPKYNI (78 aa)). The region spanning 196 to 231 (KKIVKELEGKMISASDNMEFEQAAEYRDVIKAIGTL) is the UVR domain. The disordered stretch occupies residues 647 to 669 (PHKSDENWESIKDNVPLLKSEKS). Residues 648-658 (HKSDENWESIK) show a composition bias toward basic and acidic residues.

The protein belongs to the UvrC family. Interacts with UvrB in an incision complex.

The protein resides in the cytoplasm. Functionally, the UvrABC repair system catalyzes the recognition and processing of DNA lesions. UvrC both incises the 5' and 3' sides of the lesion. The N-terminal half is responsible for the 3' incision and the C-terminal half is responsible for the 5' incision. This Lactococcus lactis subsp. cremoris (strain MG1363) protein is UvrABC system protein C.